Consider the following 340-residue polypeptide: Protein-arginine kinase (340 aa).

One can recognise a Phosphagen kinase C-terminal domain in the interval 21-242 (VVLSSRIRLA…EQIIMQERIA (222 aa)). ATP-binding positions include 24–28 (SSRIR), His-79, Arg-113, 164–168 (RASVM), and 195–200 (RGIYGE).

Belongs to the ATP:guanido phosphotransferase family.

The enzyme catalyses L-arginyl-[protein] + ATP = N(omega)-phospho-L-arginyl-[protein] + ADP + H(+). Catalyzes the specific phosphorylation of arginine residues in proteins. In Listeria monocytogenes serotype 4a (strain HCC23), this protein is Protein-arginine kinase.